The chain runs to 287 residues: U-megalopygitoxin(8)-Mc8 (287 aa).

A signal peptide spans 1–17 (MYLQYLVLSLFSTTVYG).

Belongs to the caterpillar 8 family. Post-translationally, contains 2 disulfide bonds. Expressed by the venom apparatus.

It localises to the secreted. Its function is as follows. Probable toxin. The polypeptide is U-megalopygitoxin(8)-Mc8 (Megalopyge crispata (Black-waved flannel moth)).